The primary structure comprises 70 residues: Peptide BmKn1 (70 aa).

The N-terminal stretch at 1–23 (MKSQTFFLLFLVVLLLAISQSEA) is a signal peptide. The residue at position 36 (F36) is a Phenylalanine amide. Positions 40-70 (SMRDMDTMKYLYDPSLSAADLKTLQKLMENY) are excised as a propeptide.

The protein belongs to the non-disulfide-bridged peptide (NDBP) superfamily. Short antimicrobial peptide (group 4) family. In terms of tissue distribution, expressed by the venom gland.

Its subcellular location is the secreted. The protein resides in the target cell membrane. Antibacterial peptide. This is Peptide BmKn1 from Olivierus martensii (Manchurian scorpion).